Reading from the N-terminus, the 231-residue chain is Small ribosomal subunit protein uS5 (231 aa).

The S5 DRBM domain maps to 61-124; that stretch reads KFRSKKPYRM…NRAKLNIIKV (64 aa).

The protein belongs to the universal ribosomal protein uS5 family. Part of the 30S ribosomal subunit. Contacts protein S4.

Functionally, with S4 and S12 plays an important role in translational accuracy. The protein is Small ribosomal subunit protein uS5 of Nanoarchaeum equitans (strain Kin4-M).